The chain runs to 234 residues: Glycerol uptake facilitator protein (234 aa).

6 helical membrane passes run 9–29 (FLGTLILILLGNGVVAGVVLP), 37–57 (GWIVITMGWGIAVAVAVFVSG), 61–81 (PAHLNPAVTIGVALKGGLPWA), 83–103 (VLPYILAQFAGAMLGQILVWL), 135–155 (LISEILGTFVLVLTIFALGLY), and 159–179 (AGIGTFAVGTLIVGIGLSLGG). The short motif at 65–67 (NPA) is the NPA 1 element. Residues 186 to 188 (NPA) carry the NPA 2 motif. The chain crosses the membrane as a helical span at residues 214–234 (WIPVVGPVIGAALAVLVFSLF).

The protein belongs to the MIP/aquaporin (TC 1.A.8) family.

The protein localises to the cell membrane. It carries out the reaction glycerol(in) = glycerol(out). Mediates glycerol diffusion across the cytoplasmic membrane via a pore-type mechanism. The protein is Glycerol uptake facilitator protein (glpF) of Streptococcus pneumoniae (strain ATCC BAA-255 / R6).